The sequence spans 131 residues: Large ribosomal subunit protein bL19 (131 aa).

It belongs to the bacterial ribosomal protein bL19 family.

This protein is located at the 30S-50S ribosomal subunit interface and may play a role in the structure and function of the aminoacyl-tRNA binding site. This is Large ribosomal subunit protein bL19 from Synechococcus sp. (strain CC9902).